A 1295-amino-acid chain; its full sequence is Serine protease pet autotransporter (1295 aa).

An N-terminal signal peptide occupies residues 1–52; it reads MNKIYSIKYSAATGGLIAVSELAKKVICKTNRKISAALLSLAVISYTNIIYA. Residues 54 to 304 form the Peptidase S6 domain; sequence NMDISKAWAR…TPFDSKTTNE (251 aa). Active-site charge relay system residues include H124, D153, and S260. One can recognise an Autotransporter domain in the interval 1029 to 1295; that stretch reads DINGEAGAWA…AINANFRYSF (267 aa).

Cleaved to release the mature protein from the outer membrane.

The protein resides in the periplasm. The protein localises to the secreted. It localises to the cell surface. Its subcellular location is the cell outer membrane. With respect to regulation, inhibition of cytotoxic activity by phenylmethylsulfonyl fluoride. Its function is as follows. Serine protease with enterotoxic and cytotoxic activity. Internalization into the host cell is required for the induction of cytopathic effects. However, the serine activity is not necessary for secretion and internalization into the host cell. This is Serine protease pet autotransporter (pet) from Escherichia coli O44:H18 (strain 042 / EAEC).